The primary structure comprises 113 residues: Cell cycle protein GpsB (113 aa).

The stretch at 36 to 68 (LDMVIKDYSTFTQEIEALQAENIRLVQELDNAP) forms a coiled coil.

Belongs to the GpsB family. As to quaternary structure, forms polymers through the coiled coil domains. Interacts with PBP1, MreC and EzrA.

It localises to the cytoplasm. In terms of biological role, divisome component that associates with the complex late in its assembly, after the Z-ring is formed, and is dependent on DivIC and PBP2B for its recruitment to the divisome. Together with EzrA, is a key component of the system that regulates PBP1 localization during cell cycle progression. Its main role could be the removal of PBP1 from the cell pole after pole maturation is completed. Also contributes to the recruitment of PBP1 to the division complex. Not essential for septum formation. In Listeria welshimeri serovar 6b (strain ATCC 35897 / DSM 20650 / CCUG 15529 / CIP 8149 / NCTC 11857 / SLCC 5334 / V8), this protein is Cell cycle protein GpsB.